Consider the following 137-residue polypeptide: Large ribosomal subunit protein uL16 (137 aa).

The protein belongs to the universal ribosomal protein uL16 family. As to quaternary structure, part of the 50S ribosomal subunit.

Binds 23S rRNA and is also seen to make contacts with the A and possibly P site tRNAs. This chain is Large ribosomal subunit protein uL16, found in Cereibacter sphaeroides (strain ATCC 17029 / ATH 2.4.9) (Rhodobacter sphaeroides).